The primary structure comprises 432 residues: MTELISIKDSSKHVDQKVKMHVWLTDKRSSGKIIFLQLRDGTAFFQGVVRKNDVSEEVFEAAKSLRQEASFYITGTVHEDKRSHFGYEIQISDLEIVSNNEGYPIGNKEHGVDFLLDNRHLWLRSKRPFAIMQIRNTMFKATVDFFEKEGFIKFDAPIFMHSAPEGTTQLFHVEYFNNDAYLSQSGQLYGEAGAMAYGKIFTFGPTFRAEESKGRRHMTEFWMMEPEMAWMHQDESLDIQERYLAYMVKQVLENNEYELRILGRDPEKLRPTTEGNFTRLPYDDAIKMLQEAGRDIKWGDDFGAPDEGYISEQFDRPVFIVNYPTTIKPFYMKKNPDNPKEYLCADVIAPEGYGEIFGGSEREGNYEILKKQIEEAGLNLEDYQWYLDLRKFGGVPHSGFGMGFERTIAWICKLDHIREAIPFPRLINRMQP.

Belongs to the class-II aminoacyl-tRNA synthetase family. In terms of assembly, homodimer.

Its subcellular location is the cytoplasm. It catalyses the reaction tRNA(Asn) + L-asparagine + ATP = L-asparaginyl-tRNA(Asn) + AMP + diphosphate + H(+). This chain is Asparagine--tRNA ligase, found in Lactobacillus gasseri (strain ATCC 33323 / DSM 20243 / BCRC 14619 / CIP 102991 / JCM 1131 / KCTC 3163 / NCIMB 11718 / NCTC 13722 / AM63).